Here is a 333-residue protein sequence, read N- to C-terminus: Dehydrodolichyl diphosphate synthase complex subunit DHDDS (333 aa).

(2E,6E)-farnesyl diphosphate-binding residues include D34, G35, R37, R38, and R85. Positions 34, 35, 37, 38, 85, 205, 211, and 213 each coordinate isopentenyl diphosphate. A Mg(2+)-binding site is contributed by D34.

It belongs to the UPP synthase family. As to quaternary structure, the active dehydrodolichyl diphosphate synthase complex is a heterotetramer composed of a dimer of heterodimer of DHDDS and NUS1. Interacts with NPC2. Requires Mg(2+) as cofactor. As to expression, ubiquitous. Expressed at high levels in testis and kidney. Expressed in epididymis (at protein level).

The protein resides in the endoplasmic reticulum membrane. The enzyme catalyses n isopentenyl diphosphate + (2E,6E)-farnesyl diphosphate = a di-trans,poly-cis-polyprenyl diphosphate + n diphosphate. The protein operates within protein modification; protein glycosylation. It functions in the pathway lipid metabolism. Its activity is regulated as follows. Activated by phospholipids including cardiolipin, phosphatidylcholine, phosphatidylethanolamine, phosphatidylinositol and phosphatidylserine. Functionally, with NUS1, forms the dehydrodolichyl diphosphate synthase (DDS) complex, an essential component of the dolichol monophosphate (Dol-P) biosynthetic machinery. Both subunits contribute to enzymatic activity, i.e. condensation of multiple copies of isopentenyl pyrophosphate (IPP) to farnesyl pyrophosphate (FPP) to produce dehydrodolichyl diphosphate (Dedol-PP), a precursor of dolichol phosphate which is utilized as a sugar carrier in protein glycosylation in the endoplasmic reticulum (ER). Synthesizes long-chain polyprenols, mostly of C95 and C100 chain length. Regulates the glycosylation and stability of nascent NPC2, thereby promoting trafficking of LDL-derived cholesterol. The polypeptide is Dehydrodolichyl diphosphate synthase complex subunit DHDDS (Homo sapiens (Human)).